The chain runs to 602 residues: Elongation factor 4 (602 aa).

The 182-residue stretch at 7–188 folds into the tr-type G domain; it reads ENIRNFSIIA…AIIELIPPPK (182 aa). Residues 19-24 and 135-138 contribute to the GTP site; these read DHGKST and NKID.

The protein belongs to the TRAFAC class translation factor GTPase superfamily. Classic translation factor GTPase family. LepA subfamily.

The protein localises to the cell inner membrane. It catalyses the reaction GTP + H2O = GDP + phosphate + H(+). Required for accurate and efficient protein synthesis under certain stress conditions. May act as a fidelity factor of the translation reaction, by catalyzing a one-codon backward translocation of tRNAs on improperly translocated ribosomes. Back-translocation proceeds from a post-translocation (POST) complex to a pre-translocation (PRE) complex, thus giving elongation factor G a second chance to translocate the tRNAs correctly. Binds to ribosomes in a GTP-dependent manner. This Chlamydia caviae (strain ATCC VR-813 / DSM 19441 / 03DC25 / GPIC) (Chlamydophila caviae) protein is Elongation factor 4.